A 341-amino-acid chain; its full sequence is Large ribosomal subunit protein uL10 (341 aa).

Positions 301 to 341 (EAAPAAAPAAEEKAEEEKKEEEEEKKEDQELSGLDSIFGGF) are disordered.

The protein belongs to the universal ribosomal protein uL10 family. In terms of assembly, part of the 50S ribosomal subunit. Forms part of the ribosomal stalk which helps the ribosome interact with GTP-bound translation factors. Forms a heptameric L10(L12)2(L12)2(L12)2 complex, where L10 forms an elongated spine to which the L12 dimers bind in a sequential fashion.

Forms part of the ribosomal stalk, playing a central role in the interaction of the ribosome with GTP-bound translation factors. This chain is Large ribosomal subunit protein uL10, found in Aeropyrum pernix (strain ATCC 700893 / DSM 11879 / JCM 9820 / NBRC 100138 / K1).